Consider the following 459-residue polypeptide: 2-(3-amino-3-carboxypropyl)histidine synthase subunit 1 (459 aa).

The segment at 1 to 68 is disordered; the sequence is MEDDRAQVDL…AGANTSIEDS (68 aa). A compositionally biased stretch (low complexity) spans 41–61; the sequence is SAAAGKSSSSSSNSTSQPAGA. [4Fe-4S] cluster contacts are provided by cysteine 165, cysteine 268, and cysteine 403.

Belongs to the DPH1/DPH2 family. DPH1 subfamily. As to quaternary structure, component of the 2-(3-amino-3-carboxypropyl)histidine synthase complex composed of dph-1, dph-2, dph-3 and a NADH-dependent reductase, predominantly cbr-1. Requires [4Fe-4S] cluster as cofactor.

It localises to the cytoplasm. It catalyses the reaction L-histidyl-[translation elongation factor 2] + S-adenosyl-L-methionine = 2-[(3S)-amino-3-carboxypropyl]-L-histidyl-[translation elongation factor 2] + S-methyl-5'-thioadenosine + H(+). It functions in the pathway protein modification; peptidyl-diphthamide biosynthesis. Catalyzes the first step of diphthamide biosynthesis, a post-translational modification of histidine which occurs in elongation factor 2. Dph-1 and dph-2 transfer a 3-amino-3-carboxypropyl (ACP) group from S-adenosyl-L-methionine (SAM) to a histidine residue, the reaction is assisted by a reduction system comprising dph-3 and a NADH-dependent reductase, predominantly cbr-1. The protein is 2-(3-amino-3-carboxypropyl)histidine synthase subunit 1 (dph-1) of Neurospora crassa (strain ATCC 24698 / 74-OR23-1A / CBS 708.71 / DSM 1257 / FGSC 987).